Consider the following 113-residue polypeptide: Ribonuclease P protein component (113 aa).

Belongs to the RnpA family. Consists of a catalytic RNA component (M1 or rnpB) and a protein subunit.

It catalyses the reaction Endonucleolytic cleavage of RNA, removing 5'-extranucleotides from tRNA precursor.. Its function is as follows. RNaseP catalyzes the removal of the 5'-leader sequence from pre-tRNA to produce the mature 5'-terminus. It can also cleave other RNA substrates such as 4.5S RNA. The protein component plays an auxiliary but essential role in vivo by binding to the 5'-leader sequence and broadening the substrate specificity of the ribozyme. In Ligilactobacillus salivarius (strain UCC118) (Lactobacillus salivarius), this protein is Ribonuclease P protein component.